We begin with the raw amino-acid sequence, 37 residues long: Albumin-2 (37 aa).

A Hemopexin repeat occupies 6–37; sequence IANFSVLNXEAYLFINDKYVLLDYAPGTXNDK.

As to quaternary structure, dimer. As to expression, expressed in seeds (at protein level).

The protein resides in the cytoplasm. It is found in the cytosol. In terms of biological role, binds hemin and thiamine. The sequence is that of Albumin-2 from Lens culinaris (Lentil).